The sequence spans 549 residues: Leucine-rich repeat, immunoglobulin-like domain and transmembrane domain-containing protein 2 (549 aa).

The first 22 residues, 1-22, serve as a signal peptide directing secretion; it reads MAFVFYCFLQVLVSWVIHAVQP. The LRRNT domain occupies 23–54; sequence FCLPECTCSEESFGRSLQCMSMSLGKIPDNFP. LRR repeat units follow at residues 80–103, 104–125, 128–149, and 152–173; these read SLEY…EDLP, ELRE…AFRA, LLRV…ALQF, and NLIY…VFLN. Residue Asn-90 is glycosylated (N-linked (GlcNAc...) asparagine). Residues 200–252 enclose the LRRCT domain; the sequence is NPWLCDCRLRGLAQFVKSVGPPFILVNSYLVCQGPVSKAGQLLHETELGVCMK. The Ig-like domain maps to 253–339; sequence PTISTPSVNV…FNSIGRSSLV (87 aa). Asn-261 carries an N-linked (GlcNAc...) asparagine glycan. The cysteines at positions 274 and 327 are disulfide-linked. Residues 361–447 enclose the Fibronectin type-III domain; sequence EVSAYVDLRV…QPPSQGQCVV (87 aa). Residues 463–483 form a helical membrane-spanning segment; the sequence is LLHVTVVLCAVLLALPVGAYV. A glycan (N-linked (GlcNAc...) asparagine) is linked at Asn-491. The tract at residues 521–549 is disordered; the sequence is FKDPSGVYEDGESHRVMEEDEEVEKEGIS. Acidic residues predominate over residues 538–549; that stretch reads EEDEEVEKEGIS.

As to quaternary structure, interacts with LRIT1; may form a heterodimer with LRIT1.

The protein resides in the membrane. The protein is Leucine-rich repeat, immunoglobulin-like domain and transmembrane domain-containing protein 2 (Lrit2) of Mus musculus (Mouse).